A 330-amino-acid chain; its full sequence is DNA-directed RNA polymerase subunit alpha (330 aa).

The interval Met1–Glu231 is alpha N-terminal domain (alpha-NTD). Positions Met253–Glu330 are alpha C-terminal domain (alpha-CTD).

This sequence belongs to the RNA polymerase alpha chain family. In terms of assembly, homodimer. The RNAP catalytic core consists of 2 alpha, 1 beta, 1 beta' and 1 omega subunit. When a sigma factor is associated with the core the holoenzyme is formed, which can initiate transcription.

It carries out the reaction RNA(n) + a ribonucleoside 5'-triphosphate = RNA(n+1) + diphosphate. Functionally, DNA-dependent RNA polymerase catalyzes the transcription of DNA into RNA using the four ribonucleoside triphosphates as substrates. This chain is DNA-directed RNA polymerase subunit alpha, found in Flavobacterium psychrophilum (strain ATCC 49511 / DSM 21280 / CIP 103535 / JIP02/86).